The chain runs to 192 residues: ADP-ribosylation factor-like protein 14 (192 aa).

Gly-2 is lipidated: N-myristoyl glycine. GTP-binding positions include Gly-20–Ser-27, Asp-64–Gln-68, and Asn-124–Asp-127.

Belongs to the small GTPase superfamily. Arf family. In terms of assembly, interacts with ARL14EP.

It localises to the cytoplasmic vesicle. GTPase that recruits MYO1E to MHC class II-containing vesicles via the effector protein ARL14EP and hence controls the movement of these vesicles along the actin cytoskeleton in dendritic cells. The sequence is that of ADP-ribosylation factor-like protein 14 (Arl14) from Mus musculus (Mouse).